Consider the following 173-residue polypeptide: Small ribosomal subunit protein uS5 (173 aa).

Residues 17-80 (WQERVIQIRR…SDAKKHVVDV (64 aa)) enclose the S5 DRBM domain.

It belongs to the universal ribosomal protein uS5 family. Part of the 30S ribosomal subunit. Contacts proteins S4 and S8.

Functionally, with S4 and S12 plays an important role in translational accuracy. Its function is as follows. Located at the back of the 30S subunit body where it stabilizes the conformation of the head with respect to the body. In Picosynechococcus sp. (strain ATCC 27264 / PCC 7002 / PR-6) (Agmenellum quadruplicatum), this protein is Small ribosomal subunit protein uS5.